The sequence spans 204 residues: Peptide deformylase (204 aa).

Residues C131 and H174 each contribute to the Fe cation site. E175 is an active-site residue. A Fe cation-binding site is contributed by H178.

It belongs to the polypeptide deformylase family. Fe(2+) is required as a cofactor.

It catalyses the reaction N-terminal N-formyl-L-methionyl-[peptide] + H2O = N-terminal L-methionyl-[peptide] + formate. Removes the formyl group from the N-terminal Met of newly synthesized proteins. Requires at least a dipeptide for an efficient rate of reaction. N-terminal L-methionine is a prerequisite for activity but the enzyme has broad specificity at other positions. The protein is Peptide deformylase of Streptococcus equi subsp. zooepidemicus (strain MGCS10565).